The chain runs to 489 residues: MSPPLVIKNGTVVNEDGMFKADVLVRNGIIVEVSPNITALPDTEVIDATDRLVIPGGIDPHTHMQMPYMGEVTKDDFLKGTEAAVAGGTTMIIDFCCPDHRNGESLIAGYNRWRSWADPKVCCDYGLSVAITMWRPETAEQMAIITSPEFGVNSFKFYMAYENTLMVRDDELFRGMQECAKLRALARVHCENGSVIKEKEIDLLAKGVTGPEGHTQSRPEEIEAEATNRACVLAAQANCPVYIVHVMTKGAASAISHHRAQGSIVFGEPIAAGLALDGSHYYNEDWLHAARYVMSPPLSRDPTTPELLMKLLAAGELHLTGTDNCTYDCRQKSLGKGNFTKIPNGINGVEDRMSVVWEKGVHSGIIDPMRYVSITSSTAAKIFNIYPRKGRIAVGSDADIVIFNPNATRTISKDTHHHNLDFNIFEGINCHGVAEVTISRGRIVWAHGKLQTVPGSGKFIPLLANSPFVFSTHEKREQKIQPRIVERLE.

Zn(2+) contacts are provided by histidine 61, histidine 63, and lysine 156. Lysine 156 is subject to N6-carboxylysine. Substrate is bound at residue tyrosine 161. The Zn(2+) site is built by histidine 189 and histidine 245. A substrate-binding site is contributed by serine 295. Aspartate 323 is a binding site for Zn(2+). Asparagine 344 contributes to the substrate binding site.

It belongs to the metallo-dependent hydrolases superfamily. Hydantoinase/dihydropyrimidinase family. Homotetramer. Zn(2+) is required as a cofactor. Post-translationally, carboxylation allows a single lysine to coordinate two zinc ions. In terms of tissue distribution, in L1-L2 larvae, expressed in body hypodermal cells, hemidesmosomes and in a neuronal cell between the pharynx and ring neuropil. In adults, expression is seen in body hypodermal cells and pharynx.

The protein resides in the nucleus. It carries out the reaction 5,6-dihydrouracil + H2O = 3-(carbamoylamino)propanoate + H(+). This Caenorhabditis elegans protein is Dihydropyrimidinase 1 (dhp-1).